Here is a 98-residue protein sequence, read N- to C-terminus: NADH-ubiquinone oxidoreductase chain 4L (98 aa).

Transmembrane regions (helical) follow at residues 1-21, 26-46, and 59-79; these read MTHI…GLTF, LLSA…ALAM, and APLL…SLLV.

Belongs to the complex I subunit 4L family.

Its subcellular location is the mitochondrion membrane. The catalysed reaction is a ubiquinone + NADH + 5 H(+)(in) = a ubiquinol + NAD(+) + 4 H(+)(out). In terms of biological role, core subunit of the mitochondrial membrane respiratory chain NADH dehydrogenase (Complex I) which catalyzes electron transfer from NADH through the respiratory chain, using ubiquinone as an electron acceptor. Part of the enzyme membrane arm which is embedded in the lipid bilayer and involved in proton translocation. The chain is NADH-ubiquinone oxidoreductase chain 4L (MT-ND4L) from Polypterus ornatipinnis (Ornate bichir).